A 192-amino-acid polypeptide reads, in one-letter code: Phosphoheptose isomerase (192 aa).

Residues 37-192 enclose the SIS domain; that stretch reads LADSFKAGGK…IQLIEKEMVK (156 aa). 52–54 is a substrate binding site; sequence NGG. Residues histidine 61 and glutamate 65 each contribute to the Zn(2+) site. Residues glutamate 65, 93-94, 119-121, serine 124, and glutamine 172 each bind substrate; these read ND and STS. Glutamine 172 and histidine 180 together coordinate Zn(2+).

It belongs to the SIS family. GmhA subfamily. In terms of assembly, homotetramer. It depends on Zn(2+) as a cofactor.

Its subcellular location is the cytoplasm. It carries out the reaction 2 D-sedoheptulose 7-phosphate = D-glycero-alpha-D-manno-heptose 7-phosphate + D-glycero-beta-D-manno-heptose 7-phosphate. The protein operates within carbohydrate biosynthesis; D-glycero-D-manno-heptose 7-phosphate biosynthesis; D-glycero-alpha-D-manno-heptose 7-phosphate and D-glycero-beta-D-manno-heptose 7-phosphate from sedoheptulose 7-phosphate: step 1/1. Catalyzes the isomerization of sedoheptulose 7-phosphate in D-glycero-D-manno-heptose 7-phosphate. The protein is Phosphoheptose isomerase of Escherichia coli O139:H28 (strain E24377A / ETEC).